A 1030-amino-acid polypeptide reads, in one-letter code: Translation initiation factor IF-2 (1030 aa).

2 stretches are compositionally biased toward low complexity: residues 56-69 and 111-132; these read APSE…AADS and PNIV…APIK. Disordered stretches follow at residues 56–361 and 394–434; these read APSE…KRRQ and SKPK…REQK. Basic and acidic residues predominate over residues 134–144; the sequence is ARPEKSAEKPE. Positions 154-164 are enriched in low complexity; it reads AASAEPAKSPS. Residues 188–206 show a composition bias toward basic and acidic residues; that stretch reads LLRKPEIVRRSEAKPERTS. Residues 259 to 273 are compositionally biased toward low complexity; that stretch reads VAASASGVPAAASRV. One can recognise a tr-type G domain in the interval 522-695; sequence TRPPVVTVMG…LLVTEVEELV (174 aa). The segment at 531–538 is G1; sequence GHVDHGKT. 531 to 538 contributes to the GTP binding site; that stretch reads GHVDHGKT. The tract at residues 556-560 is G2; it reads GITQH. The tract at residues 581–584 is G3; the sequence is DTPG. Residues 581–585 and 635–638 each bind GTP; these read DTPGH and NKCD. The segment at 635–638 is G4; it reads NKCD. A G5 region spans residues 671–673; sequence SAI.

The protein belongs to the TRAFAC class translation factor GTPase superfamily. Classic translation factor GTPase family. IF-2 subfamily.

Its subcellular location is the cytoplasm. In terms of biological role, one of the essential components for the initiation of protein synthesis. Protects formylmethionyl-tRNA from spontaneous hydrolysis and promotes its binding to the 30S ribosomal subunits. Also involved in the hydrolysis of GTP during the formation of the 70S ribosomal complex. The chain is Translation initiation factor IF-2 from Synechococcus elongatus (strain ATCC 33912 / PCC 7942 / FACHB-805) (Anacystis nidulans R2).